A 420-amino-acid chain; its full sequence is Probable pectate lyase C (420 aa).

The signal sequence occupies residues methionine 1–alanine 20. N-linked (GlcNAc...) asparagine glycosylation is found at asparagine 49, asparagine 165, and asparagine 202. Residue arginine 205 is part of the active site. Residues asparagine 262–methionine 297 enclose the EF-hand domain. Residues aspartate 275, aspartate 277, aspartate 279, glutamine 281, and glutamate 286 each coordinate Ca(2+). The interval threonine 358 to serine 396 is disordered. The N-linked (GlcNAc...) asparagine glycan is linked to asparagine 394.

It belongs to the polysaccharide lyase 1 family. Requires Ca(2+) as cofactor.

It is found in the secreted. It carries out the reaction Eliminative cleavage of (1-&gt;4)-alpha-D-galacturonan to give oligosaccharides with 4-deoxy-alpha-D-galact-4-enuronosyl groups at their non-reducing ends.. Its function is as follows. Pectinolytic enzyme consist of four classes of enzymes: pectin lyase, polygalacturonase, pectin methylesterase and rhamnogalacturonase. Among pectinolytic enzymes, pectin lyase is the most important in depolymerization of pectin, since it cleaves internal glycosidic bonds of highly methylated pectins. Favors pectate, the anion, over pectin, the methyl ester. The protein is Probable pectate lyase C (plyC) of Aspergillus fumigatus (strain ATCC MYA-4609 / CBS 101355 / FGSC A1100 / Af293) (Neosartorya fumigata).